The following is a 292-amino-acid chain: Enoyl-CoA hydratase domain-containing protein 2, mitochondrial (292 aa).

The transit peptide at 1–35 (MLRVLCLLRPWRPLRARGCASDGAAGGSEIQVRAL) directs the protein to the mitochondrion. Lys-97 bears the N6-acetyllysine; alternate mark. Lys-97 is modified (N6-succinyllysine; alternate).

This sequence belongs to the enoyl-CoA hydratase/isomerase family.

The protein resides in the mitochondrion. This chain is Enoyl-CoA hydratase domain-containing protein 2, mitochondrial (ECHDC2), found in Homo sapiens (Human).